Consider the following 953-residue polypeptide: Translation initiation factor IF-2 (953 aa).

Disordered regions lie at residues 52–241 (KASK…QQEA) and 279–363 (TKLK…TERK). Composition is skewed to basic and acidic residues over residues 80-89 (TGSEHVEKTQ), 98-111 (FKAEREARAKEQAA), and 140-188 (QGDK…ENHK). The segment covering 191 to 207 (RFTNQKKQGRQEPQSKS) has biased composition (polar residues). A compositionally biased stretch (basic and acidic residues) spans 229–241 (RQSETRFRAQQEA). Positions 282–291 (KSSNISAKST) are enriched in polar residues. Over residues 300–317 (ARPEKNRELTHHSQEGQK) the composition is skewed to basic and acidic residues. Positions 322–338 (SWNSQNQVRNQKNSNWN) are enriched in low complexity. Basic residues predominate over residues 339–348 (KNKKTKKGKN). Residues 454–623 (ERAPVVTIMG…LLVAEVEELK (170 aa)) enclose the tr-type G domain. The tract at residues 463-470 (GHVDHGKT) is G1. A GTP-binding site is contributed by 463–470 (GHVDHGKT). Residues 488–492 (GITQH) form a G2 region. The tract at residues 509–512 (DTPG) is G3. GTP-binding positions include 509–513 (DTPGH) and 563–566 (NKID). A G4 region spans residues 563–566 (NKID). The G5 stretch occupies residues 599–601 (SAK).

This sequence belongs to the TRAFAC class translation factor GTPase superfamily. Classic translation factor GTPase family. IF-2 subfamily.

It localises to the cytoplasm. In terms of biological role, one of the essential components for the initiation of protein synthesis. Protects formylmethionyl-tRNA from spontaneous hydrolysis and promotes its binding to the 30S ribosomal subunits. Also involved in the hydrolysis of GTP during the formation of the 70S ribosomal complex. This is Translation initiation factor IF-2 from Streptococcus pyogenes serotype M4 (strain MGAS10750).